The chain runs to 432 residues: Glutamate-1-semialdehyde 2,1-aminomutase (432 aa).

An N6-(pyridoxal phosphate)lysine modification is found at lysine 272.

This sequence belongs to the class-III pyridoxal-phosphate-dependent aminotransferase family. HemL subfamily. Homodimer. The cofactor is pyridoxal 5'-phosphate.

The protein localises to the cytoplasm. The catalysed reaction is (S)-4-amino-5-oxopentanoate = 5-aminolevulinate. The protein operates within porphyrin-containing compound metabolism; protoporphyrin-IX biosynthesis; 5-aminolevulinate from L-glutamyl-tRNA(Glu): step 2/2. Its pathway is porphyrin-containing compound metabolism; chlorophyll biosynthesis. This chain is Glutamate-1-semialdehyde 2,1-aminomutase, found in Trichormus variabilis (strain ATCC 29413 / PCC 7937) (Anabaena variabilis).